The following is a 463-amino-acid chain: L-seryl-tRNA(Sec) selenium transferase (463 aa).

At K295 the chain carries N6-(pyridoxal phosphate)lysine.

It belongs to the SelA family. Homodecamer; pentamer of dimers. Binds only one seryl-tRNA(Sec) per dimer. Requires pyridoxal 5'-phosphate as cofactor.

The protein localises to the cytoplasm. The catalysed reaction is L-seryl-tRNA(Sec) + selenophosphate + H(+) = L-selenocysteinyl-tRNA(Sec) + phosphate. Its pathway is aminoacyl-tRNA biosynthesis; selenocysteinyl-tRNA(Sec) biosynthesis; selenocysteinyl-tRNA(Sec) from L-seryl-tRNA(Sec) (bacterial route): step 1/1. In terms of biological role, converts seryl-tRNA(Sec) to selenocysteinyl-tRNA(Sec) required for selenoprotein biosynthesis. In Escherichia coli (strain K12 / MC4100 / BW2952), this protein is L-seryl-tRNA(Sec) selenium transferase.